Here is a 1145-residue protein sequence, read N- to C-terminus: Protein STU1 (1145 aa).

HEAT repeat units follow at residues 96 to 134 (TLPL…EKYV) and 168 to 206 (YVPV…KSDL). Disordered stretches follow at residues 226–271 (ELIP…GIDT), 510–793 (LLNK…VVDP), and 816–839 (PEPV…PAAS). Low complexity predominate over residues 229–239 (PTSSRPETPAA). The span at 535 to 545 (SKSTMGTSKPS) shows a compositional bias: polar residues. Composition is skewed to low complexity over residues 580–594 (TTTT…SGAR), 663–676 (ASHA…SPSS), and 696–708 (QSQS…SSPS).

It belongs to the CLASP family. In terms of assembly, interacts with microtubules.

It localises to the cytoplasm. It is found in the cytoskeleton. The protein localises to the nucleus. Its subcellular location is the spindle. Its function is as follows. Microtubule binding protein that promotes the stabilization of dynamic microtubules. Required for mitotic spindle formation. This chain is Protein STU1 (STU1), found in Gibberella zeae (strain ATCC MYA-4620 / CBS 123657 / FGSC 9075 / NRRL 31084 / PH-1) (Wheat head blight fungus).